Reading from the N-terminus, the 158-residue chain is Transcription elongation factor GreA (158 aa).

This sequence belongs to the GreA/GreB family.

Functionally, necessary for efficient RNA polymerase transcription elongation past template-encoded arresting sites. The arresting sites in DNA have the property of trapping a certain fraction of elongating RNA polymerases that pass through, resulting in locked ternary complexes. Cleavage of the nascent transcript by cleavage factors such as GreA or GreB allows the resumption of elongation from the new 3'terminus. GreA releases sequences of 2 to 3 nucleotides. The chain is Transcription elongation factor GreA from Macrococcus caseolyticus (strain JCSC5402) (Macrococcoides caseolyticum).